The sequence spans 346 residues: D-alanine--D-alanine ligase (346 aa).

The 207-residue stretch at 134-340 (KFLAESLGVK…IDYTYIHSIQ (207 aa)) folds into the ATP-grasp domain. ATP is bound at residue 161–212 (EYPVIIKPVRLGSSIGVSIVKSEAELDYALDVAFEFDNDVIVEPFIDGVKEF). Residues Asp-284, Glu-296, and Asn-298 each contribute to the Mg(2+) site.

The protein belongs to the D-alanine--D-alanine ligase family. Mg(2+) is required as a cofactor. Requires Mn(2+) as cofactor.

Its subcellular location is the cytoplasm. The enzyme catalyses 2 D-alanine + ATP = D-alanyl-D-alanine + ADP + phosphate + H(+). Its pathway is cell wall biogenesis; peptidoglycan biosynthesis. Its function is as follows. Cell wall formation. The chain is D-alanine--D-alanine ligase from Sulfurovum sp. (strain NBC37-1).